Here is a 249-residue protein sequence, read N- to C-terminus: Proteasome activator complex subunit 1 (249 aa).

The disordered stretch occupies residues 60-102 (PLDIPVPDPVKEKEKEERKKQQEKEDKDEKKKGEDEDKGPPCG). Residues 68-98 (PVKEKEKEERKKQQEKEDKDEKKKGEDEDKG) are compositionally biased toward basic and acidic residues.

Belongs to the PA28 family. As to quaternary structure, heterodimer of PSME1 and PSME2, which forms a hexameric ring. PSME1 can form homoheptamers.

Functionally, implicated in immunoproteasome assembly and required for efficient antigen processing. The PA28 activator complex enhances the generation of class I binding peptides by altering the cleavage pattern of the proteasome. The chain is Proteasome activator complex subunit 1 (PSME1) from Sus scrofa (Pig).